A 201-amino-acid polypeptide reads, in one-letter code: LexA repressor 1 (201 aa).

Positions 27-47 (LAEIAQAFGFASRNAAQKHVQ) form a DNA-binding region, H-T-H motif. Active-site for autocatalytic cleavage activity residues include serine 122 and lysine 159.

The protein belongs to the peptidase S24 family. In terms of assembly, homodimer.

It catalyses the reaction Hydrolysis of Ala-|-Gly bond in repressor LexA.. Represses a number of genes involved in the response to DNA damage (SOS response), including recA and lexA. In the presence of single-stranded DNA, RecA interacts with LexA causing an autocatalytic cleavage which disrupts the DNA-binding part of LexA, leading to derepression of the SOS regulon and eventually DNA repair. The sequence is that of LexA repressor 1 from Xanthomonas axonopodis pv. citri (strain 306).